The sequence spans 184 residues: MSEIVSVSGGPTKPEIIAVSLSKLGLQDGDRFADVGCGTGSVSIEAARIARNLTIYAIDARKEALLATEANFKSFGIENARVLAGEASELLGSGGSIDSIDCAFVGGTKNIDAILEKLVEKKTRSIVVNAVRIETVVRTIEAMKKLGIFDEVVHISVSRSAPIAGETMFKPENPVYIVVGKKQA.

Residues T12, 36-40, D59, and A87 contribute to the S-adenosyl-L-methionine site; that span reads GCGTG.

This sequence belongs to the methyltransferase superfamily. Archaeal-type CbiT family.

It carries out the reaction Co-precorrin-6B + S-adenosyl-L-methionine = Co-precorrin-7 + S-adenosyl-L-homocysteine + CO2. It functions in the pathway cofactor biosynthesis; adenosylcobalamin biosynthesis; cob(II)yrinate a,c-diamide from sirohydrochlorin (anaerobic route): step 8/10. Its function is as follows. Catalyzes the methylation of C-15 in cobalt-precorrin-6B followed by the decarboxylation of C-12 to form cobalt-precorrin-7. The chain is Probable cobalt-precorrin-6B C(15)-methyltransferase (decarboxylating) from Methanosarcina acetivorans (strain ATCC 35395 / DSM 2834 / JCM 12185 / C2A).